The following is a 398-amino-acid chain: Dual-specificity RNA methyltransferase RlmN (398 aa).

Residue glutamate 121 is the Proton acceptor of the active site. Positions 127–370 (ETDRGTLCVS…VRTPRGRDIL (244 aa)) constitute a Radical SAM core domain. A disulfide bridge connects residues cysteine 134 and cysteine 373. [4Fe-4S] cluster is bound by residues cysteine 141, cysteine 145, and cysteine 148. S-adenosyl-L-methionine is bound by residues 199 to 200 (GE), serine 231, 253 to 255 (SLH), and asparagine 330. Cysteine 373 acts as the S-methylcysteine intermediate in catalysis.

The protein belongs to the radical SAM superfamily. RlmN family. The cofactor is [4Fe-4S] cluster.

The protein resides in the cytoplasm. It carries out the reaction adenosine(2503) in 23S rRNA + 2 reduced [2Fe-2S]-[ferredoxin] + 2 S-adenosyl-L-methionine = 2-methyladenosine(2503) in 23S rRNA + 5'-deoxyadenosine + L-methionine + 2 oxidized [2Fe-2S]-[ferredoxin] + S-adenosyl-L-homocysteine. It catalyses the reaction adenosine(37) in tRNA + 2 reduced [2Fe-2S]-[ferredoxin] + 2 S-adenosyl-L-methionine = 2-methyladenosine(37) in tRNA + 5'-deoxyadenosine + L-methionine + 2 oxidized [2Fe-2S]-[ferredoxin] + S-adenosyl-L-homocysteine. Specifically methylates position 2 of adenine 2503 in 23S rRNA and position 2 of adenine 37 in tRNAs. m2A2503 modification seems to play a crucial role in the proofreading step occurring at the peptidyl transferase center and thus would serve to optimize ribosomal fidelity. In Rhodopseudomonas palustris (strain BisB5), this protein is Dual-specificity RNA methyltransferase RlmN.